Consider the following 105-residue polypeptide: Nucleoid-associated protein lin2851 (105 aa).

The segment covering 1–16 (MRGMGNMQGMMKQMQK) has biased composition (low complexity). Positions 1-23 (MRGMGNMQGMMKQMQKMQKEMAK) are disordered.

The protein belongs to the YbaB/EbfC family. As to quaternary structure, homodimer.

It localises to the cytoplasm. Its subcellular location is the nucleoid. Functionally, binds to DNA and alters its conformation. May be involved in regulation of gene expression, nucleoid organization and DNA protection. In Listeria innocua serovar 6a (strain ATCC BAA-680 / CLIP 11262), this protein is Nucleoid-associated protein lin2851.